A 56-amino-acid polypeptide reads, in one-letter code: Putative zinc-binding protein YnfU (56 aa).

Zn(2+)-binding residues include Cys19, Cys22, Cys41, and Cys44.

Requires Zn(2+) as cofactor.

In Escherichia coli (strain K12), this protein is Putative zinc-binding protein YnfU.